Reading from the N-terminus, the 331-residue chain is MSIAAKDIEPADIPGNLQGGEYSPYHVFSAEEWSRFRADTPLTLTADEVQRLRSLNDPVDLDEVRRIYLSLSRLLSAHVEASQILFRQRTRFLSMSNETKTPFVIGVAGSVAVGKSTTARILAELLARWPSSPKVDLVTTDGFLYPNAVLQRESLMDRKGFPESYDIGALLRFLSAIKAGRPNVKAPTYSHLTYDVIPDQFQLVDRPDILVFEGINVLQSRDLPADGKIVPMVSDFFDFSIYIDAEESLIHSWYVNRFMRLRETAFQNPQSFFHRYATISEDAARAIAEGLWHNINLKNLHQNILPTRPRADLILQKGPSHLTQTVALRKL.

109-116 (GSVAVGKS) provides a ligand contact to ATP.

Belongs to the prokaryotic pantothenate kinase family.

Its subcellular location is the cytoplasm. It carries out the reaction (R)-pantothenate + ATP = (R)-4'-phosphopantothenate + ADP + H(+). It functions in the pathway cofactor biosynthesis; coenzyme A biosynthesis; CoA from (R)-pantothenate: step 1/5. This is Pantothenate kinase from Sinorhizobium medicae (strain WSM419) (Ensifer medicae).